Reading from the N-terminus, the 145-residue chain is Small ribosomal subunit protein eS19 (145 aa).

Positions 120–145 are disordered; the sequence is GGRRISENGQRDLDRIAAQTLEEDDE. Positions 123–134 are enriched in basic and acidic residues; it reads RISENGQRDLDR.

This sequence belongs to the eukaryotic ribosomal protein eS19 family. As to quaternary structure, component of the small ribosomal subunit. Mature ribosomes consist of a small (40S) and a large (60S) subunit. The 40S subunit contains about 32 different proteins and 1 molecule of RNA (18S). The 60S subunit contains 45 different proteins and 3 molecules of RNA (25S, 5.8S and 5S).

It is found in the cytoplasm. Its function is as follows. Component of the ribosome, a large ribonucleoprotein complex responsible for the synthesis of proteins in the cell. The small ribosomal subunit (SSU) binds messenger RNAs (mRNAs) and translates the encoded message by selecting cognate aminoacyl-transfer RNA (tRNA) molecules. The large subunit (LSU) contains the ribosomal catalytic site termed the peptidyl transferase center (PTC), which catalyzes the formation of peptide bonds, thereby polymerizing the amino acids delivered by tRNAs into a polypeptide chain. The nascent polypeptides leave the ribosome through a tunnel in the LSU and interact with protein factors that function in enzymatic processing, targeting, and the membrane insertion of nascent chains at the exit of the ribosomal tunnel. RPS19A is required for proper maturation of the small (40S) ribosomal subunit. The protein is Small ribosomal subunit protein eS19 (RPS19A) of Candida albicans (strain SC5314 / ATCC MYA-2876) (Yeast).